The sequence spans 376 residues: tRNA-specific 2-thiouridylase MnmA (376 aa).

ATP contacts are provided by residues 17–24 (GMSGGVDS) and Met43. The interval 103 to 105 (NPD) is interaction with target base in tRNA. The active-site Nucleophile is Cys108. A disulfide bridge connects residues Cys108 and Cys204. Gly132 contacts ATP. Residues 154–156 (KDQ) form an interaction with tRNA region. The active-site Cysteine persulfide intermediate is Cys204. Positions 316 to 317 (RY) are interaction with tRNA.

The protein belongs to the MnmA/TRMU family.

It is found in the cytoplasm. The enzyme catalyses S-sulfanyl-L-cysteinyl-[protein] + uridine(34) in tRNA + AH2 + ATP = 2-thiouridine(34) in tRNA + L-cysteinyl-[protein] + A + AMP + diphosphate + H(+). Catalyzes the 2-thiolation of uridine at the wobble position (U34) of tRNA, leading to the formation of s(2)U34. The chain is tRNA-specific 2-thiouridylase MnmA from Pseudomonas savastanoi pv. phaseolicola (strain 1448A / Race 6) (Pseudomonas syringae pv. phaseolicola (strain 1448A / Race 6)).